We begin with the raw amino-acid sequence, 626 residues long: ATP-dependent RNA helicase cyt-19, mitochondrial (626 aa).

A Q motif motif is present at residues 74–103 (ADLAALGVHENVVRAITHGMGYENMTEVQS). The Helicase ATP-binding domain maps to 106 to 297 (ISPALKGKDI…RSYIDKNNFE (192 aa)). 119 to 126 (AKTGTGKT) lines the ATP pocket. The short motif at 241–244 (DEAD) is the DEAD box element. Residues 329–493 (AMLELIEKAL…CASVNAADSG (165 aa)) enclose the Helicase C-terminal domain. The disordered stretch occupies residues 569–626 (LRVETREHSMRPMGSGPGHRRDFNSRGPRRQSDDPFENALHRAQDLDRRPTRRQQASF). Residues 578–626 (MRPMGSGPGHRRDFNSRGPRRQSDDPFENALHRAQDLDRRPTRRQQASF) form an RNA-binding region. A compositionally biased stretch (basic and acidic residues) spans 607–617 (ALHRAQDLDRR).

It belongs to the DEAD box helicase family.

The protein localises to the mitochondrion matrix. It catalyses the reaction ATP + H2O = ADP + phosphate + H(+). Its activity is regulated as follows. Activated by exposed helices in a group I intron RNA. Acts as an RNA chaperone to resolve non-native structures formed during RNA folding to promote mitochondrial group I, but also group II, intron splicing. Functions predominantly by disrupting accessible RNA secondary structure and depends on spontaneous openings in tightly packed RNAs to gain access to RNA helices. The polypeptide is ATP-dependent RNA helicase cyt-19, mitochondrial (Neurospora crassa (strain ATCC 24698 / 74-OR23-1A / CBS 708.71 / DSM 1257 / FGSC 987)).